The following is a 284-amino-acid chain: Cytosolic Fe-S cluster assembly factor NUBP2 homolog (284 aa).

ATP is bound at residue 27 to 34 (GKGGVGKS). [4Fe-4S] cluster-binding residues include C200 and C203.

The protein belongs to the Mrp/NBP35 ATP-binding proteins family. NUBP2/CFD1 subfamily. Heterotetramer of 2 NUBP1 and 2 NUBP2 chains. It depends on [4Fe-4S] cluster as a cofactor.

The protein resides in the cytoplasm. In terms of biological role, component of the cytosolic iron-sulfur (Fe/S) protein assembly (CIA) machinery. Required for maturation of extramitochondrial Fe-S proteins. The NUBP1-NUBP2 heterotetramer forms a Fe-S scaffold complex, mediating the de novo assembly of an Fe-S cluster and its transfer to target apoproteins. The polypeptide is Cytosolic Fe-S cluster assembly factor NUBP2 homolog (Monosiga brevicollis (Choanoflagellate)).